The primary structure comprises 701 residues: Kinesin-like protein KIN-10C (701 aa).

Residues 8 to 318 (VVRVVARVKP…LNLASRICLG (311 aa)) enclose the Kinesin motor domain. 94–101 (GARNSGKT) lines the ATP pocket.

The protein belongs to the TRAFAC class myosin-kinesin ATPase superfamily. Kinesin family. KIN-10 subfamily.

This chain is Kinesin-like protein KIN-10C, found in Arabidopsis thaliana (Mouse-ear cress).